Reading from the N-terminus, the 164-residue chain is Anterior gradient protein 3 (164 aa).

An N-terminal signal peptide occupies residues 1 to 19 (MYFPMIELTLVLLASSNLA). The Prevents secretion from ER motif lies at 161–164 (QTEL).

It belongs to the AGR family.

It localises to the endoplasmic reticulum. It is found in the cytoplasm. Functionally, required for calcium-mediated regulation of ciliary beat frequency in the airway. This is Anterior gradient protein 3 from Xenopus tropicalis (Western clawed frog).